A 350-amino-acid polypeptide reads, in one-letter code: Eukaryotic translation initiation factor 3 subunit I (350 aa).

6 WD repeats span residues 8–49, 51–89, 91–135, 149–188, 198–240, and 296–335; these read GHER…GTLE, HQGV…CVFT, ESPS…ESLT, QDGA…AVNS, EKNV…KVYK, and GHFG…FDFY.

Belongs to the eIF-3 subunit I family. In terms of assembly, component of the eukaryotic translation initiation factor 3 (eIF-3) complex.

It localises to the cytoplasm. Functionally, component of the eukaryotic translation initiation factor 3 (eIF-3) complex, which is involved in protein synthesis of a specialized repertoire of mRNAs and, together with other initiation factors, stimulates binding of mRNA and methionyl-tRNAi to the 40S ribosome. The eIF-3 complex specifically targets and initiates translation of a subset of mRNAs involved in cell proliferation. The sequence is that of Eukaryotic translation initiation factor 3 subunit I from Scheffersomyces stipitis (strain ATCC 58785 / CBS 6054 / NBRC 10063 / NRRL Y-11545) (Yeast).